The following is a 227-amino-acid chain: Adenosylcobinamide-GDP ribazoletransferase (227 aa).

A run of 5 helical transmembrane segments spans residues 3-23 (CLKAVVAFFTALPVGGAELDF), 26-46 (IWATPYLAGLMVGGAGGAVYF), 95-115 (GVGGIFAVVALFVLAASARPE), 117-137 (WLDYIVTDLYSKALALVVAAY), and 165-185 (AVAAWLHPAAFLAATVLSLFF).

Belongs to the CobS family. Mg(2+) serves as cofactor.

The protein resides in the cell membrane. It catalyses the reaction alpha-ribazole + adenosylcob(III)inamide-GDP = adenosylcob(III)alamin + GMP + H(+). The catalysed reaction is alpha-ribazole 5'-phosphate + adenosylcob(III)inamide-GDP = adenosylcob(III)alamin 5'-phosphate + GMP + H(+). It participates in cofactor biosynthesis; adenosylcobalamin biosynthesis; adenosylcobalamin from cob(II)yrinate a,c-diamide: step 7/7. Joins adenosylcobinamide-GDP and alpha-ribazole to generate adenosylcobalamin (Ado-cobalamin). Also synthesizes adenosylcobalamin 5'-phosphate from adenosylcobinamide-GDP and alpha-ribazole 5'-phosphate. This Pyrobaculum islandicum (strain DSM 4184 / JCM 9189 / GEO3) protein is Adenosylcobinamide-GDP ribazoletransferase.